The sequence spans 87 residues: MEEQKSGRKTRVGRVLSNKMDKTVVVVVERLIHHPQYHKFIRRQNKFKAHDAQNACRVGDRVIIEESRPISKDKRWVVVQVLDKAVI.

The protein belongs to the universal ribosomal protein uS17 family. In terms of assembly, part of the 30S ribosomal subunit.

One of the primary rRNA binding proteins, it binds specifically to the 5'-end of 16S ribosomal RNA. In Syntrophobacter fumaroxidans (strain DSM 10017 / MPOB), this protein is Small ribosomal subunit protein uS17.